The primary structure comprises 223 residues: Endonuclease NucS (223 aa).

It belongs to the NucS endonuclease family.

The protein resides in the cytoplasm. Its function is as follows. Cleaves both 3' and 5' ssDNA extremities of branched DNA structures. This Mycobacterium sp. (strain JLS) protein is Endonuclease NucS.